The chain runs to 641 residues: 1-deoxy-D-xylulose-5-phosphate synthase (641 aa).

Thiamine diphosphate contacts are provided by residues His-80 and 121-123 (GHS). Asp-152 provides a ligand contact to Mg(2+). Thiamine diphosphate is bound by residues 153-154 (GS), Asn-181, Tyr-290, and Glu-372. Position 181 (Asn-181) interacts with Mg(2+).

This sequence belongs to the transketolase family. DXPS subfamily. As to quaternary structure, homodimer. Mg(2+) serves as cofactor. Requires thiamine diphosphate as cofactor.

It carries out the reaction D-glyceraldehyde 3-phosphate + pyruvate + H(+) = 1-deoxy-D-xylulose 5-phosphate + CO2. The protein operates within metabolic intermediate biosynthesis; 1-deoxy-D-xylulose 5-phosphate biosynthesis; 1-deoxy-D-xylulose 5-phosphate from D-glyceraldehyde 3-phosphate and pyruvate: step 1/1. Its function is as follows. Catalyzes the acyloin condensation reaction between C atoms 2 and 3 of pyruvate and glyceraldehyde 3-phosphate to yield 1-deoxy-D-xylulose-5-phosphate (DXP). This Rhodobacter capsulatus (Rhodopseudomonas capsulata) protein is 1-deoxy-D-xylulose-5-phosphate synthase.